We begin with the raw amino-acid sequence, 484 residues long: ATP synthase subunit beta (484 aa).

The segment at Glu-104–Phe-123 is disordered. Residue Gly-156–Thr-163 coordinates ATP.

The protein belongs to the ATPase alpha/beta chains family. F-type ATPases have 2 components, CF(1) - the catalytic core - and CF(0) - the membrane proton channel. CF(1) has five subunits: alpha(3), beta(3), gamma(1), delta(1), epsilon(1). CF(0) has three main subunits: a(1), b(2) and c(9-12). The alpha and beta chains form an alternating ring which encloses part of the gamma chain. CF(1) is attached to CF(0) by a central stalk formed by the gamma and epsilon chains, while a peripheral stalk is formed by the delta and b chains.

The protein resides in the cell inner membrane. The catalysed reaction is ATP + H2O + 4 H(+)(in) = ADP + phosphate + 5 H(+)(out). Its function is as follows. Produces ATP from ADP in the presence of a proton gradient across the membrane. The catalytic sites are hosted primarily by the beta subunits. This chain is ATP synthase subunit beta, found in Zymomonas mobilis subsp. mobilis (strain ATCC 31821 / ZM4 / CP4).